A 381-amino-acid polypeptide reads, in one-letter code: L-lactate dehydrogenase A-like 6B (381 aa).

NAD(+) contacts are provided by residues 101 to 106 (DLDEDK) and Arg-148. The substrate site is built by Arg-155, Asn-187, and Arg-218. Asn-187 contacts NAD(+). His-242 serves as the catalytic Proton acceptor. A substrate-binding site is contributed by Thr-297.

The protein belongs to the LDH/MDH superfamily. LDH family. Testis specific.

The catalysed reaction is (S)-lactate + NAD(+) = pyruvate + NADH + H(+). Its pathway is fermentation; pyruvate fermentation to lactate; (S)-lactate from pyruvate: step 1/1. The protein is L-lactate dehydrogenase A-like 6B (LDHAL6B) of Homo sapiens (Human).